The following is a 173-amino-acid chain: MNLEKLEVSHDADSLCVVIEISKHSNIKYELDKESGALMVDRVLYGAQNYPANYGFVPNTLGSDGDPVDALVLSDVAFQAGSVVKARLVGVLNMEDESGMDEKLIALPIDKIDPTHSYVKDIDDLSKHTLDKIKHFFETYKDLEPNKWVKVKGFENKESAIKVLEKAIKAYQG.

Substrate is bound by residues K28, R42, and Y54. 3 residues coordinate Mg(2+): D64, D69, and D101. Position 140 (Y140) interacts with substrate.

It belongs to the PPase family. As to quaternary structure, homohexamer. Mg(2+) is required as a cofactor.

It localises to the cytoplasm. The enzyme catalyses diphosphate + H2O = 2 phosphate + H(+). Catalyzes the hydrolysis of inorganic pyrophosphate (PPi) forming two phosphate ions. The polypeptide is Inorganic pyrophosphatase (Helicobacter pylori (strain ATCC 700392 / 26695) (Campylobacter pylori)).